The following is a 434-amino-acid chain: Vi polysaccharide export inner-membrane protein VexD (434 aa).

Residues 1–50 (MENSERIKKWKEERAKVAQESRASRLQQKEDERALRQTEKSADAKSHHNP) are compositionally biased toward basic and acidic residues. Residues 1 to 58 (MENSERIKKWKEERAKVAQESRASRLQQKEDERALRQTEKSADAKSHHNPDAGWSATD) are disordered. 2 consecutive transmembrane segments (helical) span residues 84–104 (LFLY…ILTS) and 409–429 (WLLF…LITI).

Belongs to the BexC/CtrB/KpsE family.

It localises to the cell inner membrane. May form an ATP-driven capsule polysaccharide export apparatus, in association with the VexA, VexB and VexC proteins. The polypeptide is Vi polysaccharide export inner-membrane protein VexD (vexD) (Salmonella typhi).